The chain runs to 287 residues: Neugrin (287 aa).

The first 23 residues, 1-23, serve as a signal peptide directing secretion; that stretch reads MAFSPNVLLGGRVCAAVARSGFA. The disordered stretch occupies residues 149–169; sequence SIPELPGPGDSSKPLSAGQSV. A glycan (N-linked (GlcNAc...) asparagine) is linked at Asn202.

This sequence belongs to the neugrin family. Forms a regulatory protein-RNA complex, consisting of RCC1L, NGRN, RPUSD3, RPUSD4, TRUB2, FASTKD2 and 16S mt-rRNA. Interacts with 16S mt-rRNA; this interaction is direct.

The protein resides in the nucleus. The protein localises to the secreted. It localises to the mitochondrion membrane. Functionally, plays an essential role in mitochondrial ribosome biogenesis. As a component of a functional protein-RNA module, consisting of RCC1L, NGRN, RPUSD3, RPUSD4, TRUB2, FASTKD2 and 16S mitochondrial ribosomal RNA (16S mt-rRNA), controls 16S mt-rRNA abundance and is required for intra-mitochondrial translation of core subunits of the oxidative phosphorylation system. The sequence is that of Neugrin (NGRN) from Bos taurus (Bovine).